Here is a 588-residue protein sequence, read N- to C-terminus: Zeta-carotene desaturase, chloroplastic/chromoplastic (588 aa).

A chloroplast and chromoplast-targeting transit peptide spans 1-49; it reads MATCSAYLCCPATSASLKKRVFPDGSAGFLFFGGRRLSNRLVTPKSVIR.

It belongs to the zeta carotene desaturase family. As to quaternary structure, monomer and dimer. Decylplastoquinone serves as cofactor. 6-decylubiquinone is required as a cofactor.

Its subcellular location is the plastid. It is found in the chloroplast. The protein resides in the chromoplast. It catalyses the reaction 9,9'-di-cis-zeta-carotene + 2 a quinone = 7,7',9,9'-tetra-cis-lycopene + 2 a quinol. It functions in the pathway carotenoid biosynthesis; lycopene biosynthesis. In terms of biological role, catalyzes the conversion of zeta-carotene to lycopene via the intermediary of neurosporene. It carries out two consecutive desaturations (introduction of double bonds) at positions C-7 and C-7'. Shows stereoselectivity toward trans C15-C15'zeta-carotene double bond. The zeta-carotene produced by the phytoene desaturase PDS has a C15-C15' double bond in the cis configuration and it requires isomerization before being recognized as substrate by ZDS. No activity with all-trans-zeta-carotene. The main product is 7,9,7',9'-tetra-cis-lycopene (pro-lycopene). This chain is Zeta-carotene desaturase, chloroplastic/chromoplastic (ZDS), found in Capsicum annuum (Capsicum pepper).